Here is a 1069-residue protein sequence, read N- to C-terminus: Protocadherin-8 (1069 aa).

The first 29 residues, 1-29, serve as a signal peptide directing secretion; the sequence is MSPVKRWGSPCLFPLQLFSLCWVLSVAQS. 6 Cadherin domains span residues 30–135, 136–245, 247–354, 393–497, 498–609, and 615–721; these read KTVR…APRF, PRAQ…SPAF, QGAV…APDI, QETG…APLF, TKPV…SPVL, and ANGS…VPAS. Residues 30 to 747 are Extracellular-facing; that stretch reads KTVRYSTFEE…SGPSLQWDTP (718 aa). Asn616 carries N-linked (GlcNAc...) asparagine glycosylation. Positions 719–738 are disordered; it reads PASAGSPEHFRPPGSRLAPS. The chain crosses the membrane as a helical span at residues 748-768; sequence LIVIIVLAGSCTLLLAAIIAI. Over 769 to 1069 the chain is Cytoplasmic; the sequence is ATTCNRRKKE…SPKKGTNENV (301 aa). Disordered stretches follow at residues 777–859, 905–927, and 1031–1069; these read KEVR…TGES, REAE…DSDS, and LSPP…NENV. Composition is skewed to basic and acidic residues over residues 780 to 790 and 905 to 920; these read RKGGALREERP and REAE…KGDS. Residue Ser1052 is modified to Phosphoserine.

The N-terminal extracellular domain forms homophilic interactions; these interactions activate p38 MAPK via TAOK2 and trigger endocytosis. Interacts with CDH2; this interaction may lead to CDH2 cointernalization. Interacts with CDH11. Interacts with TAOK2. As to expression, enriched in brain relative to peripheral tissues, with low expression in the testis. Expressed in hippocampal neurons (at protein level).

The protein resides in the cell membrane. It localises to the cell projection. It is found in the dendrite. The protein localises to the presynaptic cell membrane. Its subcellular location is the postsynaptic cell membrane. In terms of biological role, calcium-dependent cell-adhesion protein. May play a role in activity-induced synaptic reorganization underlying long term memory. Could be involved in CDH2 internalization through TAOK2/p38 MAPK pathway. In hippocampal neurons, may play a role in the down-regulation of dendritic spines, maybe through its action on CDH2 endocytosis. This chain is Protocadherin-8 (Pcdh8), found in Rattus norvegicus (Rat).